Here is a 189-residue protein sequence, read N- to C-terminus: dCTP deaminase (189 aa).

Residues 112–117 (KSTYAR), 136–138 (TLE), Gln-157, Tyr-171, and Gln-181 each bind dCTP. Glu-138 acts as the Proton donor/acceptor in catalysis.

It belongs to the dCTP deaminase family. As to quaternary structure, homotrimer.

The catalysed reaction is dCTP + H2O + H(+) = dUTP + NH4(+). The protein operates within pyrimidine metabolism; dUMP biosynthesis; dUMP from dCTP (dUTP route): step 1/2. Catalyzes the deamination of dCTP to dUTP. This Alcanivorax borkumensis (strain ATCC 700651 / DSM 11573 / NCIMB 13689 / SK2) protein is dCTP deaminase.